A 469-amino-acid polypeptide reads, in one-letter code: Mitochondrial adenyl nucleotide antiporter SLC25A25 (469 aa).

The regulatory N-terminal domain stretch occupies residues 1 to 165 (MLCLCLYVPV…LYWKHSTIFD (165 aa)). The Mitochondrial intermembrane segment spans residues 1–189 (MLCLCLYVPV…ERQTGMWWRH (189 aa)). 3 consecutive EF-hand domains span residues 47 to 80 (TYRQ…QDHE), 78 to 113 (DHEK…LGVK), and 114 to 149 (ISEQ…HPVE). Ca(2+)-binding residues include Asp60, Asp62, Asp64, Gln66, and Glu71. Residues 151–160 (IPEIILYWKH) form a linker region region. A C-terminal transmembrane transporter domain region spans residues 166–469 (VGENLTVPDE…LKITLGVQSR (304 aa)). 3 Solcar repeats span residues 184–270 (GMWW…IKRL), 278–363 (LRIH…LKNA), and 375–463 (PGVF…LKIT). A helical transmembrane segment spans residues 190–207 (LVAGGGAGAVSRTCTAPL). The Mitochondrial matrix portion of the chain corresponds to 208–244 (DRLKVLMQVHASRSNNMGIVGGFTQMIREGGARSLWR). A helical membrane pass occupies residues 245 to 264 (GNGINVLKIAPESAIKFMAY). At 265–287 (EQIKRLVGSDQETLRIHERLVAG) the chain is on the mitochondrial intermembrane side. A helical transmembrane segment spans residues 288–301 (SLAGAIAQSSIYPM). The Mitochondrial matrix portion of the chain corresponds to 302–337 (EVLKTRMALRKTGQYSGMLDCARRILAREGVAAFYK). Residues 338–357 (GYVPNMLGIIPYAGIDLAVY) traverse the membrane as a helical segment. The Mitochondrial intermembrane portion of the chain corresponds to 358 to 380 (ETLKNAWLQHYAVNSADPGVFVL). A helical transmembrane segment spans residues 381 to 398 (LACGTMSSTCGQLASYPL). The Mitochondrial matrix portion of the chain corresponds to 399–437 (ALVRTRMQAQASIEGAPEVTMSSLFKHILRTEGAFGLYR). Residues 438–457 (GLAPNFMKVIPAVSISYVVY) form a helical membrane-spanning segment. The Mitochondrial intermembrane segment spans residues 458 to 469 (ENLKITLGVQSR).

Belongs to the mitochondrial carrier (TC 2.A.29) family. Widely expressed. Expressed in fetal and adult liver, skeletal muscle, testis, ovary, hippocampus and caudate nucleus. In terms of tissue distribution, expressed in all tissues tested. As to expression, expression is restricted to kidney and lung.

The protein localises to the mitochondrion inner membrane. It catalyses the reaction Mg(2+)(out) + phosphate(in) + ATP(out) = Mg(2+)(in) + phosphate(out) + ATP(in). Activated by an increase in cytosolic calcium levels that induce a conformational change of the N-terminal regulatory domain, uncapping the channel and allowing transport. Functionally, electroneutral antiporter that most probably mediates the transport of adenyl nucleotides through the inner mitochondrial membrane. Originally identified as an ATP-magnesium/inorganic phosphate antiporter, it could have a broader specificity for adenyl nucleotides. By regulating the mitochondrial matrix adenyl nucleotide pool could adapt to changing cellular energetic demands and indirectly regulate adenyl nucleotide-dependent metabolic pathways. The polypeptide is Mitochondrial adenyl nucleotide antiporter SLC25A25 (Homo sapiens (Human)).